A 334-amino-acid chain; its full sequence is MGSIGSMGKPIEGFLVAAIQFPVPIVNSRKDIDHNIESIIRTLHATKAGYPGVELIIFPEYSTQGLNTAKWLSEEFLLDVPGKETELYAKACKEAKVYGVFSIMERNPDSNKNPYNTAIIIDPQGKIILKYRKLFPWNPIEPWYPGDLGMPVCEGPGGSKLAVCICHDGMIPELAREAAYKGCNVYIRISGYSTQVNDQWILTNRSNAWHNLMYTVSVNLAGYDNVFYYFGEGQICNFDGTTLVQGHRNPWEIVTGEIYPKMADNARLSWGLENNIYNLGHRGYVAKPGGEHDAGLTYIKDLAAGKYKLPWEDHMKIKDGSVYGYPTTGGRFGK.

A CN hydrolase domain is found at 14 to 260; it reads FLVAAIQFPV…WEIVTGEIYP (247 aa). Glu60 acts as the Proton acceptor in catalysis. Lys133 acts as the Proton donor in catalysis. Cys166 serves as the catalytic Nucleophile.

Belongs to the carbon-nitrogen hydrolase superfamily. Aliphatic amidase family.

The catalysed reaction is formamide + H2O = formate + NH4(+). In terms of biological role, is an aliphatic amidase with a restricted substrate specificity, as it only hydrolyzes formamide. In Helicobacter pylori (strain Shi470), this protein is Formamidase.